The primary structure comprises 381 residues: Probable peptidoglycan glycosyltransferase FtsW (381 aa).

The Cytoplasmic segment spans residues 1-15 (MNNKKKIVKIFFYDK). A helical transmembrane segment spans residues 16–36 (ILFFLLISLSIIGIIIVSSAS). Residues 37-53 (ISFGIRLHNDYFYFAKR) lie on the Periplasmic side of the membrane. The chain crosses the membrane as a helical span at residues 54-74 (NLLYFFLSFFLFFQIIRIPIN). The Cytoplasmic portion of the chain corresponds to 75 to 81 (QLEKYNK). A helical membrane pass occupies residues 82–102 (IALLINLFLLIIVFIIGNSIN). Topologically, residues 103-109 (GAIRWIK) are periplasmic. Residues 110–130 (IGFFSIQPSECSKLILFFYIS) form a helical membrane-spanning segment. The Cytoplasmic segment spans residues 131–143 (DYIVKKNKELKNK). Residues 144–164 (LWGFLKPIIIMLIFVILLLMQ) traverse the membrane as a helical segment. Topologically, residues 165 to 166 (PD) are periplasmic. Transmembrane regions (helical) follow at residues 167–187 (LGNS…AGIN) and 188–208 (LWKC…LIIF). Residues 209–278 (KPYRIRRILS…FSILGEELGY (70 aa)) lie on the Periplasmic side of the membrane. The chain crosses the membrane as a helical span at residues 279-299 (IGSIIILIMLFFVIFRIFLIG). At 300–317 (KNSFIQKKFFSGYFSFSV) the chain is on the cytoplasmic side. A helical transmembrane segment spans residues 318–338 (GIWISLQTIMNVGGVIGILPI). Residues 339-343 (KGLTL) lie on the Periplasmic side of the membrane. A helical transmembrane segment spans residues 344–364 (PFISYGGSSLITIFSAIAIVI). Residues 365-381 (RSDFELRINKYQAYLKQ) are Cytoplasmic-facing.

The protein belongs to the SEDS family. FtsW subfamily.

It is found in the cell inner membrane. It catalyses the reaction [GlcNAc-(1-&gt;4)-Mur2Ac(oyl-L-Ala-gamma-D-Glu-L-Lys-D-Ala-D-Ala)](n)-di-trans,octa-cis-undecaprenyl diphosphate + beta-D-GlcNAc-(1-&gt;4)-Mur2Ac(oyl-L-Ala-gamma-D-Glu-L-Lys-D-Ala-D-Ala)-di-trans,octa-cis-undecaprenyl diphosphate = [GlcNAc-(1-&gt;4)-Mur2Ac(oyl-L-Ala-gamma-D-Glu-L-Lys-D-Ala-D-Ala)](n+1)-di-trans,octa-cis-undecaprenyl diphosphate + di-trans,octa-cis-undecaprenyl diphosphate + H(+). The protein operates within cell wall biogenesis; peptidoglycan biosynthesis. Peptidoglycan polymerase that is essential for cell division. The protein is Probable peptidoglycan glycosyltransferase FtsW of Wigglesworthia glossinidia brevipalpis.